A 611-amino-acid polypeptide reads, in one-letter code: TANK-binding kinase 1-binding protein 1 (611 aa).

Positions 1-280 are homodimerization; that stretch reads MESMFEDDIS…QDLASNQSEC (280 aa). Positions 48 to 162 form a coiled coil; the sequence is YGDIKERLGG…ALVETHLRQI (115 aa). Position 184 is a phosphoserine (serine 184). Positions 218 to 277 form a coiled coil; sequence TSVSVSELERRRLEEALEAAQGEARGAQLREEQLQAECERLQGELKQLQETRAQDLASNQ. Residues 281–330 are interaction with TBK1 and IKBKE; sequence DMAWVKRVGDDQVNLALAYTELTEELGRLRELSSLQGRILRTLLQEQARN. Residues 328-437 are disordered; the sequence is ARNAGQRHSP…PPPPPGERTL (110 aa). Positions 346–361 are enriched in pro residues; sequence PACPSPSPPARPPPCA. A compositionally biased stretch (low complexity) spans 362-372; it reads PCQSPAAQRRS. Phosphoserine is present on residues serine 365, serine 372, serine 379, serine 385, serine 400, and serine 415. Over residues 389–406 the composition is skewed to pro residues; it reads PSCPSPVPQRRSPVPPSC. The span at 416 to 433 shows a compositional bias: pro residues; it reads PVPPSCPAPQPRPPPPPG. Phosphoserine is present on residues serine 500 and serine 530. The UBZ1-type zinc finger occupies 579–605; sequence IRSCPLCQLGFPVGYPDDALIKHIDSH. The Zn(2+) site is built by cysteine 582, cysteine 585, histidine 601, and histidine 605.

As to quaternary structure, homodimer. May form a heterodimer with NAP1. Interacts with TKB1 and IKBKE. Weakly interacts with DDX3X.

In terms of biological role, adapter protein which constitutively binds TBK1 and IKBKE playing a role in antiviral innate immunity. Essential for the efficient induction of IRF-dependent transcription following infection with Sendai virus. The polypeptide is TANK-binding kinase 1-binding protein 1 (Mus musculus (Mouse)).